The primary structure comprises 225 residues: C-reactive protein (225 aa).

Residues 1-18 (MLVVFLCLLSVTLEATEG) form the signal peptide. Positions 23–225 (SGKVLQFKTA…TGNVLVATDN (203 aa)) constitute a Pentraxin (PTX) domain. Cys-54 and Cys-116 form a disulfide bridge. 5 residues coordinate Ca(2+): Asp-78, Asp-157, Pro-158, Asp-159, and Gln-169.

It belongs to the pentraxin family. In terms of assembly, homotrimer. Ca(2+) serves as cofactor.

The protein localises to the secreted. In terms of biological role, displays several functions associated with host defense: it promotes agglutination, bacterial capsular swelling, phagocytosis, and complement fixation through its calcium-dependent binding to phosphorylcholine. This Danio rerio (Zebrafish) protein is C-reactive protein.